The following is a 284-amino-acid chain: Cell division protein FtsQ (284 aa).

Topologically, residues 1–31 are cytoplasmic; sequence MAQLPASMRRKRAAITSIHDKPPTRKQKLAN. A helical membrane pass occupies residues 32-52; that stretch reads AGGWVLLVIAFVVLAVGIYGL. Over 53-284 the chain is Periplasmic; the sequence is YKVITDATVA…SIAGGTKAKP (232 aa). The region spanning 59–128 is the POTRA domain; that stretch reads ATVAKLEVVG…NGIRVRVMPR (70 aa).

It belongs to the FtsQ/DivIB family. FtsQ subfamily. As to quaternary structure, part of a complex composed of FtsB, FtsL and FtsQ.

It is found in the cell inner membrane. Its function is as follows. Essential cell division protein. May link together the upstream cell division proteins, which are predominantly cytoplasmic, with the downstream cell division proteins, which are predominantly periplasmic. May control correct divisome assembly. The polypeptide is Cell division protein FtsQ (Acinetobacter oleivorans (strain JCM 16667 / KCTC 23045 / DR1)).